The primary structure comprises 462 residues: Alkaline ceramidase TOD1 (462 aa).

The Cytoplasmic portion of the chain corresponds to 1-18 (MGKFITTTLSPPLYARSK). Residues 19 to 39 (LLCFSLLYLFSTIFLFLYVSL) traverse the membrane as a helical segment. Residues 40–462 (SRNQCIFRYS…CKNYLTDMWG (423 aa)) are Lumenal-facing. N-linked (GlcNAc...) asparagine glycosylation is found at Asn121, Asn132, and Asn449.

It belongs to the alkaline ceramidase family. As to expression, preferentially expressed in pollen grains, pollen tubes and silique guard cells, but barely detectable in roots, stems and leaves.

The protein localises to the golgi apparatus membrane. It catalyses the reaction an N-acylsphing-4-enine + H2O = sphing-4-enine + a fatty acid. It participates in lipid metabolism. Its function is as follows. Endoplasmic reticulum ceramidase that catalyzes the hydrolysis of ceramides into sphingosine and free fatty acids at alkaline pH (e.g. pH 9.5). Inactive on phytoceramide. Involved in the regulation of turgor pressure in guard cells and pollen tubes. The protein is Alkaline ceramidase TOD1 of Arabidopsis thaliana (Mouse-ear cress).